Reading from the N-terminus, the 428-residue chain is MSAFIVLGSQWGDEGKGKMTDYLAKDVDVVVRFQGGNNAGHTVRVGDKEYKLHIIPSGILYKDKVNVIGNGVVLDPEALFQEIDYLEKAGVDIQPDNLMISDRAQLIMPYHKVLDGIKERSRGKKDIGTTGKGIGPCYTDKMERSGIRVCDLINQDVFKENLKENLKIKNDIITKVYGEEALDFDSICDQYIEYRKKLAPYVKDISVEVYNSIKNDKKVLFEGAQGTLLDIDYGTYPYVTSSSTIAGGVCIGAGIGPTLITGAIGVAKAYTTRVGKGPFPTELFDDTGDWIRKSGREYGVTTGRARRCGWLDLVILKTSSRVSGLTNFAITKIDTLGGLEKVKVCTGYKFNGKIIDYVPASLQDLAKCEPVYEEFDGWDKDIENAKTYDELPENAKIYLNKIEEFTNTKISIVSVGPGRDQTINLNNM.

GTP-binding positions include 12 to 18 (GDEGKGK) and 40 to 42 (GHT). Asp-13 functions as the Proton acceptor in the catalytic mechanism. 2 residues coordinate Mg(2+): Asp-13 and Gly-40. IMP-binding positions include 13-16 (DEGK), 38-41 (NAGH), Thr-130, Arg-144, Gln-225, Thr-240, and Arg-304. Residue His-41 is the Proton donor of the active site. 300–306 (VTTGRAR) is a substrate binding site. Residues Arg-306, 332–334 (KID), and 414–416 (SVG) each bind GTP.

This sequence belongs to the adenylosuccinate synthetase family. In terms of assembly, homodimer. Mg(2+) serves as cofactor.

It is found in the cytoplasm. It carries out the reaction IMP + L-aspartate + GTP = N(6)-(1,2-dicarboxyethyl)-AMP + GDP + phosphate + 2 H(+). It participates in purine metabolism; AMP biosynthesis via de novo pathway; AMP from IMP: step 1/2. Functionally, plays an important role in the de novo pathway of purine nucleotide biosynthesis. Catalyzes the first committed step in the biosynthesis of AMP from IMP. This chain is Adenylosuccinate synthetase, found in Clostridium kluyveri (strain ATCC 8527 / DSM 555 / NBRC 12016 / NCIMB 10680 / K1).